A 73-amino-acid chain; its full sequence is Sodium channel neurotoxin MeuNaTxalpha-13 (73 aa).

An N-terminal signal peptide occupies residues 1 to 5; that stretch reads TGVES. One can recognise an LCN-type CS-alpha/beta domain in the interval 7–71; sequence RDAYIAKPHN…VPIRIPGKCH (65 aa). 4 cysteine pairs are disulfide-bonded: Cys17–Cys70, Cys21–Cys43, Cys29–Cys53, and Cys33–Cys55. A propeptide spans 72 to 73 (removed by a carboxypeptidase); sequence RR.

The protein belongs to the long (4 C-C) scorpion toxin superfamily. Sodium channel inhibitor family. Alpha subfamily. As to expression, expressed by the venom gland.

Its subcellular location is the secreted. Functionally, alpha toxins bind voltage-independently at site-3 of sodium channels (Nav) and inhibit the inactivation of the activated channels, thereby blocking neuronal transmission. The sequence is that of Sodium channel neurotoxin MeuNaTxalpha-13 from Mesobuthus eupeus (Lesser Asian scorpion).